Consider the following 403-residue polypeptide: Phosphoglycerate kinase (403 aa).

Residues 24–26 (DLN), arginine 39, 62–65 (HLGR), arginine 121, and arginine 161 each bind substrate. ATP-binding positions include lysine 211, glycine 299, glutamate 330, and 359 to 362 (GGDS).

This sequence belongs to the phosphoglycerate kinase family. Monomer.

It localises to the cytoplasm. It carries out the reaction (2R)-3-phosphoglycerate + ATP = (2R)-3-phospho-glyceroyl phosphate + ADP. Its pathway is carbohydrate degradation; glycolysis; pyruvate from D-glyceraldehyde 3-phosphate: step 2/5. The sequence is that of Phosphoglycerate kinase from Corynebacterium kroppenstedtii (strain DSM 44385 / JCM 11950 / CIP 105744 / CCUG 35717).